A 419-amino-acid chain; its full sequence is UDP-N-acetylglucosamine 1-carboxyvinyltransferase (419 aa).

22 to 23 (KN) is a binding site for phosphoenolpyruvate. A UDP-N-acetyl-alpha-D-glucosamine-binding site is contributed by arginine 91. Cysteine 115 (proton donor) is an active-site residue. Cysteine 115 bears the 2-(S-cysteinyl)pyruvic acid O-phosphothioketal mark. UDP-N-acetyl-alpha-D-glucosamine is bound by residues 120–124 (RPVDL), 160–163 (KVSV), aspartate 305, and valine 327.

The protein belongs to the EPSP synthase family. MurA subfamily.

It is found in the cytoplasm. It catalyses the reaction phosphoenolpyruvate + UDP-N-acetyl-alpha-D-glucosamine = UDP-N-acetyl-3-O-(1-carboxyvinyl)-alpha-D-glucosamine + phosphate. The protein operates within cell wall biogenesis; peptidoglycan biosynthesis. Its function is as follows. Cell wall formation. Adds enolpyruvyl to UDP-N-acetylglucosamine. In Salmonella arizonae (strain ATCC BAA-731 / CDC346-86 / RSK2980), this protein is UDP-N-acetylglucosamine 1-carboxyvinyltransferase.